The sequence spans 426 residues: Glutamate-1-semialdehyde 2,1-aminomutase (426 aa).

At lysine 265 the chain carries N6-(pyridoxal phosphate)lysine.

Belongs to the class-III pyridoxal-phosphate-dependent aminotransferase family. HemL subfamily. Homodimer. The cofactor is pyridoxal 5'-phosphate.

It is found in the cytoplasm. It catalyses the reaction (S)-4-amino-5-oxopentanoate = 5-aminolevulinate. It participates in porphyrin-containing compound metabolism; protoporphyrin-IX biosynthesis; 5-aminolevulinate from L-glutamyl-tRNA(Glu): step 2/2. This chain is Glutamate-1-semialdehyde 2,1-aminomutase, found in Alcanivorax borkumensis (strain ATCC 700651 / DSM 11573 / NCIMB 13689 / SK2).